Here is a 969-residue protein sequence, read N- to C-terminus: Squamosa promoter-binding-like protein 6 (969 aa).

Disordered regions lie at residues 1–25 and 54–81; these read MEAA…DMDR and EASG…VNAR. The span at 55–74 shows a compositional bias: low complexity; it reads ASGLALNSSPSSSEEAGAAS. The SBP-type zinc-finger motif lies at 149-226; sequence GPACQVEGCT…AGHNRRRRKT (78 aa). Residues Cys-152, Cys-157, Cys-174, His-177, Cys-193, Cys-196, His-200, and Cys-212 each contribute to the Zn(2+) site. The Bipartite nuclear localization signal signature appears at 209–225; that stretch reads KRSCRRRLAGHNRRRRK. A disordered region spans residues 377–434; it reads GMEGFEDGYEGSPTPAFKTTDSPNCPSWMHQDSTQSPPQTSGNSDSTSAQSLSSSNGD. Residues 393–419 show a composition bias toward polar residues; sequence FKTTDSPNCPSWMHQDSTQSPPQTSGN. Positions 420–431 are enriched in low complexity; the sequence is SDSTSAQSLSSS.

As to expression, ubiquitous.

The protein resides in the nucleus. Trans-acting factor that binds specifically to the consensus nucleotide sequence 5'-TNCGTACAA-3'. The chain is Squamosa promoter-binding-like protein 6 (SPL6) from Oryza sativa subsp. japonica (Rice).